The primary structure comprises 559 residues: TBC1 domain family member 24 (559 aa).

A 1,2-diacyl-sn-glycero-3-phospho-(1D-myo-inositol)-binding positions include Lys-36, Arg-40, Lys-238, Arg-242, and 293–297 (RLFSR). The 216-residue stretch at 47–262 (SHALRGKVYQ…KVRAGQPLES (216 aa)) folds into the Rab-GAP TBC domain. Positions 343–554 (EIVSVREMRD…IAAVEAWGFQ (212 aa)) constitute a TLDc domain. Phosphoserine occurs at positions 473 and 480.

As to quaternary structure, interacts with ARF6. In terms of tissue distribution, highest expression in brain.

Its subcellular location is the cell membrane. It localises to the cytoplasm. It is found in the cytoplasmic vesicle membrane. The protein resides in the presynapse. In terms of biological role, may act as a GTPase-activating protein for Rab family protein(s). Involved in neuronal projections development, probably through a negative modulation of ARF6 function. Involved in the regulation of synaptic vesicle trafficking. The polypeptide is TBC1 domain family member 24 (TBC1D24) (Homo sapiens (Human)).